The chain runs to 197 residues: Nascent polypeptide-associated complex subunit alpha (197 aa).

The span at 1-20 (MAEPVEDSVDEISSEGDSDV) shows a compositional bias: acidic residues. Disordered stretches follow at residues 1–46 (MAEP…RKLL) and 120–154 (GADR…SKAD). The NAC-A/B domain maps to 36–101 (DKNERKSRKL…AKVEDMSQNS (66 aa)). Residues 134–154 (SGHDHAHDHDHSHGDCASKAD) show a composition bias toward basic and acidic residues. Positions 158–195 (VNQSDIDLVVSQVGCTREQAVEALIKNKGDIVETIMQL) constitute a UBA domain.

It belongs to the NAC-alpha family.

In terms of biological role, may promote appropriate targeting of ribosome-nascent polypeptide complexes. This chain is Nascent polypeptide-associated complex subunit alpha, found in Babesia divergens.